Reading from the N-terminus, the 274-residue chain is Large ribosomal subunit protein uL2 (274 aa).

Disordered stretches follow at residues 28-55 (APHA…RHVG) and 224-274 (VAMN…RRRK).

This sequence belongs to the universal ribosomal protein uL2 family. As to quaternary structure, part of the 50S ribosomal subunit. Forms a bridge to the 30S subunit in the 70S ribosome.

Its function is as follows. One of the primary rRNA binding proteins. Required for association of the 30S and 50S subunits to form the 70S ribosome, for tRNA binding and peptide bond formation. It has been suggested to have peptidyltransferase activity; this is somewhat controversial. Makes several contacts with the 16S rRNA in the 70S ribosome. This is Large ribosomal subunit protein uL2 from Pseudomonas putida (strain ATCC 47054 / DSM 6125 / CFBP 8728 / NCIMB 11950 / KT2440).